A 380-amino-acid chain; its full sequence is Flap endonuclease 1 (380 aa).

Positions 1-104 (MGIQGLAKLI…GELAKRSERR (104 aa)) are N-domain. Arginine 19 is modified (symmetric dimethylarginine; by PRMT5). Aspartate 34 provides a ligand contact to Mg(2+). Positions 47 and 70 each coordinate DNA. Position 80 is an N6-acetyllysine (lysine 80). Aspartate 86 provides a ligand contact to Mg(2+). 2 positions are modified to symmetric dimethylarginine; by PRMT5: arginine 100 and arginine 104. Residues 122 to 253 (EVEKFTKRLV…KRAVDLIQKH (132 aa)) form an I-domain region. The Mg(2+) site is built by glutamate 158, glutamate 160, aspartate 179, and aspartate 181. Glutamate 158 serves as a coordination point for DNA. Phosphoserine; by CDK2 is present on serine 187. Arginine 192 bears the Symmetric dimethylarginine; by PRMT5 mark. Serine 197 carries the post-translational modification Phosphoserine. DNA contacts are provided by glycine 231 and aspartate 233. Aspartate 233 lines the Mg(2+) pocket. Residues serine 255, serine 293, and serine 335 each carry the phosphoserine modification. Threonine 336 bears the Phosphothreonine mark. The interval 336 to 344 (TQGRLDDFF) is interaction with PCNA. The tract at residues 349–380 (SLSSAKRKEPEPKGAAKKKQRLGPAGKFKRGK) is disordered. An N6-acetyllysine mark is found at lysine 354, lysine 375, lysine 377, and lysine 380. Residues 363–380 (AAKKKQRLGPAGKFKRGK) show a composition bias toward basic residues.

This sequence belongs to the XPG/RAD2 endonuclease family. FEN1 subfamily. In terms of assembly, interacts with PCNA. Three molecules of FEN1 bind to one PCNA trimer with each molecule binding to one PCNA monomer. PCNA stimulates the nuclease activity without altering cleavage specificity. The C-terminal domain binds EP300; can bind simultaneously to both PCNA and EP300. Interacts with DDX11; this interaction is direct and increases flap endonuclease activity of FEN1. Interacts with WDR4; regulating its endonuclease activity. Interacts with POLB. Requires Mg(2+) as cofactor. In terms of processing, acetylated by EP300. Acetylation inhibits both endonuclease and exonuclease activity. Acetylation also reduces DNA-binding activity but does not affect interaction with PCNA or EP300. Post-translationally, phosphorylation upon DNA damage induces relocalization to the nuclear plasma. Phosphorylation at Ser-187 by CDK2 occurs during late S-phase and results in dissociation from PCNA. Methylation at Arg-192 by PRMT5 impedes Ser-187 phosphorylation and increases interaction with PCNA.

The protein resides in the nucleus. The protein localises to the nucleolus. It is found in the nucleoplasm. Its subcellular location is the mitochondrion. Structure-specific nuclease with 5'-flap endonuclease and 5'-3' exonuclease activities involved in DNA replication and repair. During DNA replication, cleaves the 5'-overhanging flap structure that is generated by displacement synthesis when DNA polymerase encounters the 5'-end of a downstream Okazaki fragment. It enters the flap from the 5'-end and then tracks to cleave the flap base, leaving a nick for ligation. Also involved in the long patch base excision repair (LP-BER) pathway, by cleaving within the apurinic/apyrimidinic (AP) site-terminated flap. Acts as a genome stabilization factor that prevents flaps from equilibrating into structures that lead to duplications and deletions. Also possesses 5'-3' exonuclease activity on nicked or gapped double-stranded DNA, and exhibits RNase H activity. Also involved in replication and repair of rDNA and in repairing mitochondrial DNA. This Ovis aries (Sheep) protein is Flap endonuclease 1.